A 272-amino-acid chain; its full sequence is Ribosomal RNA small subunit methyltransferase A (272 aa).

Asn-18, Leu-20, Gly-45, Glu-66, Asp-91, and Asn-113 together coordinate S-adenosyl-L-methionine.

Belongs to the class I-like SAM-binding methyltransferase superfamily. rRNA adenine N(6)-methyltransferase family. RsmA subfamily.

The protein localises to the cytoplasm. It catalyses the reaction adenosine(1518)/adenosine(1519) in 16S rRNA + 4 S-adenosyl-L-methionine = N(6)-dimethyladenosine(1518)/N(6)-dimethyladenosine(1519) in 16S rRNA + 4 S-adenosyl-L-homocysteine + 4 H(+). Its function is as follows. Specifically dimethylates two adjacent adenosines (A1518 and A1519) in the loop of a conserved hairpin near the 3'-end of 16S rRNA in the 30S particle. May play a critical role in biogenesis of 30S subunits. The chain is Ribosomal RNA small subunit methyltransferase A from Yersinia pseudotuberculosis serotype O:1b (strain IP 31758).